The following is a 209-amino-acid chain: Uracil phosphoribosyltransferase (209 aa).

5-phospho-alpha-D-ribose 1-diphosphate contacts are provided by residues Arg79, Arg104, and Asp131–Ser139. Residues Ile194 and Gly199–Ala201 each bind uracil. 5-phospho-alpha-D-ribose 1-diphosphate is bound at residue Asp200.

It belongs to the UPRTase family. It depends on Mg(2+) as a cofactor.

It catalyses the reaction UMP + diphosphate = 5-phospho-alpha-D-ribose 1-diphosphate + uracil. Its pathway is pyrimidine metabolism; UMP biosynthesis via salvage pathway; UMP from uracil: step 1/1. Its activity is regulated as follows. Allosterically activated by GTP. In terms of biological role, catalyzes the conversion of uracil and 5-phospho-alpha-D-ribose 1-diphosphate (PRPP) to UMP and diphosphate. The sequence is that of Uracil phosphoribosyltransferase from Clostridium tetani (strain Massachusetts / E88).